The chain runs to 1170 residues: Thrombospondin-2 (1170 aa).

A signal peptide spans 1 to 18 (MLWPLLLLALWAWPSAQA). In terms of domain architecture, Laminin G-like spans 19 to 215 (GDQDEDTAFD…LQNVYLVFEN (197 aa)). The heparin-binding stretch occupies residues 19–232 (GDQDEDTAFD…KKGCQQSQGA (214 aa)). N-linked (GlcNAc...) asparagine glycans are attached at residues Asn-151, Asn-316, and Asn-330. Positions 318 to 375 (SACWQDGRFFAENETWVVDSCTKCTCKKFKTVCHQISCPPATCADPWFVEGECCPSCV) constitute a VWFC domain. TSP type-1 domains are found at residues 379–429 (EEGW…GRCD), 435–490 (DGGW…PPCP), and 492–547 (DGRW…KSCP). 26 cysteine pairs are disulfide-bonded: Cys-391-Cys-423, Cys-395-Cys-428, Cys-406-Cys-413, Cys-447-Cys-484, Cys-451-Cys-489, Cys-462-Cys-474, Cys-504-Cys-541, Cys-508-Cys-546, Cys-519-Cys-531, Cys-551-Cys-562, Cys-556-Cys-572, Cys-575-Cys-586, Cys-592-Cys-608, Cys-599-Cys-617, Cys-620-Cys-644, Cys-650-Cys-663, Cys-657-Cys-676, Cys-678-Cys-689, Cys-705-Cys-713, Cys-718-Cys-738, Cys-754-Cys-774, Cys-777-Cys-797, Cys-813-Cys-833, Cys-836-Cys-856, Cys-874-Cys-894, and Cys-910-Cys-930. N-linked (GlcNAc...) asparagine glycosylation is present at Asn-455. The region spanning 547–587 (PIDGCLSNPCFPGAECSSFPDGSWSCGSCPGGFLGNGTHCE) is the EGF-like 1 domain. The N-linked (GlcNAc...) asparagine glycan is linked to Asn-582. The EGF-like 2 domain occupies 646–690 (PENPCKDKTHSCHRHAECIYLGHFSDPMYKCECQTGYAGDGLICG). TSP type-3 repeat units lie at residues 691 to 726 (EDSDLDGWPNKNLVCATNATYHCVKDNCPLLPNSGQ), 727 to 762 (EDFDKDGIGDACDDDDDNDGVSDEKDNCQLLFNPRQ), 763 to 785 (FDYDKDEVGDRCDNCPYVHNPAQ), 786 to 821 (IDTDNNGEGDACSVDIDGDDVFNERDNCPYVYNTDQ), 822 to 844 (RDTDGDGVGDHCDNCPLVHNPDQ), 845 to 882 (TDVDNDLVGDQCDNNEDIDEDGHQNNQDNCPHIPNANQ), 883 to 918 (ADHDRDGQGDACDSDDDNDGIPDDRDNCRLVANPDQ), and 919 to 954 (EDSDGDRRGDACKDDFDNDSIPDIDDVCPENNAISE). Asn-708 carries an N-linked (GlcNAc...) asparagine glycan. The segment at 731–750 (KDGIGDACDDDDDNDGVSDE) is disordered. Over residues 737–747 (ACDDDDDNDGV) the composition is skewed to acidic residues. The interval 841 to 944 (NPDQTDVDND…DNDSIPDIDD (104 aa)) is disordered. Acidic residues-rich tracts occupy residues 845 to 864 (TDVDNDLVGDQCDNNEDIDE) and 894 to 903 (CDSDDDNDGI). The segment covering 923-933 (GDRRGDACKDD) has biased composition (basic and acidic residues). Positions 926–928 (RGD) match the Cell attachment site motif. A compositionally biased stretch (acidic residues) spans 934–944 (FDNDSIPDIDD). 2 N-linked (GlcNAc...) asparagine glycosylation sites follow: Asn-936 and Asn-1067. Cys-946 and Cys-1167 are disulfide-bonded. A TSP C-terminal domain is found at 958–1170 (RNFQMVHLDP…SDLKYECRDV (213 aa)).

The protein belongs to the thrombospondin family. In terms of assembly, homotrimer; disulfide-linked. Can bind to fibrinogen, fibronectin, laminin and type V collagen. Interacts (via the TSP type I repeats) with CD36; the interaction conveys an antiangiogenic effect. Interacts (via the TSP type I repeats) with HRG; the interaction blocks the antiangiogenic effect of THBS2 with CD36.

Functionally, adhesive glycoprotein that mediates cell-to-cell and cell-to-matrix interactions. Ligand for CD36 mediating antiangiogenic properties. The sequence is that of Thrombospondin-2 (THBS2) from Bos taurus (Bovine).